The chain runs to 603 residues: Insulin-like growth factor-binding protein complex acid labile subunit (603 aa).

A signal peptide spans 1 to 23; that stretch reads MALRTGGPALVVLLAFWVALGPC. Residues 32–74 enclose the LRRNT domain; the sequence is ASADAEGPQCPVACTCSHDDYTDELSVFCSSKNLTHLPDDIPV. 2 disulfides stabilise this stretch: cysteine 41-cysteine 47 and cysteine 45-cysteine 60. Residues asparagine 64, asparagine 85, and asparagine 96 are each glycosylated (N-linked (GlcNAc...) asparagine). 19 LRR repeats span residues 75-96, 99-120, 123-144, 147-168, 171-192, 195-216, 219-240, 243-264, 267-288, 291-312, 315-336, 339-360, 363-384, 387-408, 411-432, 435-456, 459-480, 483-504, and 507-528; these read STRA…AFQN, SLDF…ALLG, NLYY…LFTH, SLAS…LFQG, HLWD…VFQG, NLHE…LFCG, ELRE…VFVH, RLQK…AFLG, ALRW…TFPG, GLHV…TFKD, FLEE…TFEG, QLEV…AFSG, NVAV…VFQG, KLHS…TFAG, GLRR…SLAG, ELLE…LFQG, HLEY…VLGP, RAFW…LFSS, and RVRY…PGLE. Asparagine 368 carries N-linked (GlcNAc...) asparagine glycosylation. N-linked (GlcNAc...) asparagine glycosylation is present at asparagine 515. In terms of domain architecture, LRRCT spans 535–603; it reads NPWDCSCPLK…DVSETHFVHC (69 aa). 3 cysteine pairs are disulfide-bonded: cysteine 539–cysteine 581, cysteine 541–cysteine 603, and cysteine 565–cysteine 570. Asparagine 578 and asparagine 586 each carry an N-linked (GlcNAc...) asparagine glycan.

As to quaternary structure, forms a ternary complex with IGF1 and IGFBP3. As to expression, brain, kidney, lung, heart, spleen, muscle and liver.

It is found in the secreted. Its subcellular location is the extracellular space. May have an important role in regulating the access of circulating IGFs to the tissues. The chain is Insulin-like growth factor-binding protein complex acid labile subunit (Igfals) from Rattus norvegicus (Rat).